The chain runs to 617 residues: V-type proton ATPase catalytic subunit A (617 aa).

Threonine 136 is subject to Phosphothreonine. Residue 250–257 (GAFGCGKT) participates in ATP binding. At serine 384 the chain carries Phosphoserine; by AMPK.

This sequence belongs to the ATPase alpha/beta chains family. V-ATPase is a heteromultimeric enzyme made up of two complexes: the ATP-hydrolytic V1 complex and the proton translocation V0 complex. The V1 complex consists of three catalytic AB heterodimers that form a heterohexamer, three peripheral stalks each consisting of EG heterodimers, one central rotor including subunits D and F, and the regulatory subunits C and H. The proton translocation complex V0 consists of the proton transport subunit a, a ring of proteolipid subunits c9c'', rotary subunit d, subunits e and f, and the accessory subunits ATP6AP1/Ac45 and ATP6AP2/PRR. Interacts with the V0 complex V-ATPase subunit a4 ATP6V0A4. Interacts with WFS1. Interacts with alpha-crystallin B chain/CRYAB and with MTOR, forming a ternary complex. Post-translationally, phosphorylation at Ser-384 by AMPK down-regulates its enzyme activity. Expressed in brain (at protein level).

It is found in the cytoplasm. It localises to the cytosol. Its subcellular location is the cytoplasmic vesicle. The protein localises to the secretory vesicle. The protein resides in the clathrin-coated vesicle membrane. It is found in the lysosome. The catalysed reaction is ATP + H2O + 4 H(+)(in) = ADP + phosphate + 5 H(+)(out). Its activity is regulated as follows. ATP hydrolysis occurs at the interface between the nucleotide-binding domains of subunits A and B. ATP hydrolysis triggers a conformational change in the subunits D and F, which induces a shift of subunit d. The c-ring is subsequently rotated and results in a continuous proton translocation across the membrane. The V-ATPase is inhibited by bafilomycin A. Functionally, catalytic subunit of the V1 complex of vacuolar(H+)-ATPase (V-ATPase), a multisubunit enzyme composed of a peripheral complex (V1) that hydrolyzes ATP and a membrane integral complex (V0) that translocates protons. V-ATPase is responsible for acidifying and maintaining the pH of intracellular compartments and in some cell types, is targeted to the plasma membrane, where it is responsible for acidifying the extracellular environment. In aerobic conditions, involved in intracellular iron homeostasis, thus triggering the activity of Fe(2+) prolyl hydroxylase (PHD) enzymes, and leading to HIF1A hydroxylation and subsequent proteasomal degradation. May play a role in neurite development and synaptic connectivity. The chain is V-type proton ATPase catalytic subunit A (ATP6V1A) from Bos taurus (Bovine).